We begin with the raw amino-acid sequence, 169 residues long: Proepiregulin (169 aa).

A signal peptide spans 1-29 (MTAGRRMEMLCAGRVPALLLCLGFHLLQA). Positions 30–62 (VLSTTVIPSCIPGESSDNCTALVQTEDNPRVAQ) are excised as a propeptide. Residue Asn-47 is glycosylated (N-linked (GlcNAc...) asparagine). At 60-119 (VAQVSITKCSSDMNGYCLHGQCIYLVDMSQNYCRCEVGYTGVRCEHFFLTVHQPLSKEYV) the chain is on the extracellular side. One can recognise an EGF-like domain in the interval 64–104 (SITKCSSDMNGYCLHGQCIYLVDMSQNYCRCEVGYTGVRCE). Disulfide bonds link Cys-68–Cys-81, Cys-76–Cys-92, and Cys-94–Cys-103. Residues 109 to 169 (TVHQPLSKEY…TSGDPELPQV (61 aa)) constitute a propeptide, removed in mature form. A helical membrane pass occupies residues 120 to 140 (ALTVILIILFLITVVGSTYYF). Residues 141–169 (CRWYRNRKSKEPKKEYERVTSGDPELPQV) lie on the Cytoplasmic side of the membrane.

Interacts with EGFR and ERBB4. In terms of tissue distribution, in normal adults, expressed predominantly in the placenta and peripheral blood leukocytes. High levels were detected in carcinomas of the bladder, lung, kidney and colon.

Its subcellular location is the secreted. The protein localises to the extracellular space. It localises to the cell membrane. Its function is as follows. Ligand of the EGF receptor/EGFR and ERBB4. Stimulates EGFR and ERBB4 tyrosine phosphorylation. Contributes to inflammation, wound healing, tissue repair, and oocyte maturation by regulating angiogenesis and vascular remodeling and by stimulating cell proliferation. In Homo sapiens (Human), this protein is Proepiregulin (EREG).